The sequence spans 199 residues: Probable cobalt-precorrin-6B C(15)-methyltransferase (decarboxylating) (199 aa).

S-adenosyl-L-methionine contacts are provided by residues threonine 24, 48-52, aspartate 72, and alanine 101; that span reads GCGTG.

This sequence belongs to the methyltransferase superfamily. Archaeal-type CbiT family.

The enzyme catalyses Co-precorrin-6B + S-adenosyl-L-methionine = Co-precorrin-7 + S-adenosyl-L-homocysteine + CO2. It functions in the pathway cofactor biosynthesis; adenosylcobalamin biosynthesis; cob(II)yrinate a,c-diamide from sirohydrochlorin (anaerobic route): step 8/10. Its function is as follows. Catalyzes the methylation of C-15 in cobalt-precorrin-6B followed by the decarboxylation of C-12 to form cobalt-precorrin-7. This chain is Probable cobalt-precorrin-6B C(15)-methyltransferase (decarboxylating), found in Saccharolobus islandicus (strain L.S.2.15 / Lassen #1) (Sulfolobus islandicus).